A 158-amino-acid polypeptide reads, in one-letter code: Small ribosomal subunit protein uS9 (158 aa).

The protein belongs to the universal ribosomal protein uS9 family.

This chain is Small ribosomal subunit protein uS9, found in Brucella melitensis biotype 1 (strain ATCC 23456 / CCUG 17765 / NCTC 10094 / 16M).